A 518-amino-acid polypeptide reads, in one-letter code: Circadian clock oscillator protein KaiC (518 aa).

In terms of domain architecture, KaiC 1 spans 1 to 247 (MTNLPEHQSS…FTINNGINIF (247 aa)). The ATP site is built by serine 49, glycine 50, threonine 51, glycine 52, lysine 53, threonine 54, and leucine 55. Threonine 54 is a binding site for Mg(2+). The active-site Proton acceptor in CI (KaiC 1) is glutamate 78. ATP is bound at residue serine 90. The B-loop, required to bind KaiB and SasA stretch occupies residues 116–123 (QEVAGDFD). 5 residues coordinate ATP: lysine 225, leucine 226, arginine 227, threonine 229, and histidine 231. Positions 248–260 (PLGAMRLTQRSSN) are linker. Residues 261 to 518 (VRVSSGVKTL…AKGMQDLESE (258 aa)) form the KaiC 2 domain. Residues threonine 290, glycine 291, threonine 292, glycine 293, lysine 294, threonine 295, and leucine 296 each coordinate ATP. Threonine 295 serves as a coordination point for Mg(2+). Glutamate 318 is a Mg(2+) binding site. The active-site Proton acceptor in CII (KaiC 2) is glutamate 318. Residue tryptophan 331 coordinates ATP. The residue at position 431 (serine 431) is a Phosphoserine; by autocatalysis. Position 432 is a phosphothreonine; by autocatalysis (threonine 432). 7 residues coordinate ATP: arginine 451, lysine 457, methionine 458, arginine 459, serine 461, histidine 463, and lysine 465. Residues 488–497 (GIISGTPTRI) are A-loop, interacts with KaiA.

The protein belongs to the KaiC family. As to quaternary structure, homohexamer resembling 2 stacked donuts rings with a central pore nearly blocked on one side; hexamerization is dependent on ATP-binding. Binds 2 ATP per monomer, at the subunit interface on each ring. The KaiABC complex composition changes during the circadian cycle to control KaiC phosphorylation. Complexes KaiC(6), KaiA(2-4):KaiC(6), KaiB(6):KaiC(6) and KaiC(6):KaiB(6):KaiA(12) are among the most important forms, many form cooperatively. Interacts with SasA, probably as 1 SasA trimer:1 KaiC homohexamer, has highest affinity for unphosphorylated SasA. The CI domain binds to KaiB and SasA; as they have a similar fold they compete for the same site on CI. KaiB assumes a thioredoxin-like form called KaiB(fs) when bound to KaiC. Mg(2+) serves as cofactor. In terms of processing, phosphorylated on serine/threonine residues by autocatalysis. Both phosphorylated and unphosphorylated forms exist. Both autophosphorylates and autodephosphorylates. Phosphorylated form correlates with clock speed. Phosphorylated on serine and threonine residues by autocatalysis. Has a 4 step phosphorylation cycle; the autokinase acts first on Thr-432, then Ser-431. When Ser-431 is modified KaiC switches to an autophosphatase mode, acting first on phospho-Thr-432 then phospho-Ser-431.

It carries out the reaction L-seryl-[protein] + ATP = O-phospho-L-seryl-[protein] + ADP + H(+). The catalysed reaction is L-threonyl-[protein] + ATP = O-phospho-L-threonyl-[protein] + ADP + H(+). The enzyme catalyses ATP + H2O = ADP + phosphate + H(+). The interaction with KaiA enhances its phosphorylation status, while the interaction with KaiB decreases it. Functionally, central component of the KaiABC oscillator complex, which constitutes the main circadian regulator in cyanobacteria. Complex composition changes during the circadian cycle to control KaiC phosphorylation. KaiA stimulates KaiC autophosphorylation, while KaiB sequesters KaiA, leading to KaiC autodephosphorylation. Clock output pathways impact the RpaA transcriptional regulator. KaiC enhances the autophosphorylation activity of SasA, which then transfers its phosphate group to RpaA to activate it. KaiB and KaiC together enhance the phospho-RpaA dephosphatase activity of CikA. Its function is as follows. Stimulates SasA autophosphorylation. Fully phosphorylated KaiC (tested with phosphomimetic Asp-431-432-Asp) is the best stimulant, requires the ATPase activity of the CII domain. Unphosphorylated SasA associates with KaiC and its autophosphorylation activity is enhanced. Phospho-SasA is released and associates with RpaA, transferring its phosphate group. Formation of the KaiA:KaiB complex is promoted by KaiC, helping switch KaiC from its autophosphorylation to autodephosphatase function. Has a weak, temperature-independent ATPase activity (about 14 molecules of ATP per day) that defines the circadian period. ATPase activity is mostly contributed by the CI domain; the CII domain augments the activity. The addition of KaiA increases activity. ATPase is inhibited during the KaiC phosphorylating phase and activated during the KaiC dephosphorylating phase. The sequence is that of Circadian clock oscillator protein KaiC from Thermosynechococcus vestitus (strain NIES-2133 / IAM M-273 / BP-1).